A 355-amino-acid chain; its full sequence is Methylthioribose-1-phosphate isomerase (355 aa).

Residues Arg47–Ala49, Arg91, and Gln199 contribute to the substrate site. Asp240 functions as the Proton donor in the catalytic mechanism. Residue Asn250–Lys251 participates in substrate binding.

It belongs to the eIF-2B alpha/beta/delta subunits family. MtnA subfamily.

The catalysed reaction is 5-(methylsulfanyl)-alpha-D-ribose 1-phosphate = 5-(methylsulfanyl)-D-ribulose 1-phosphate. Its pathway is amino-acid biosynthesis; L-methionine biosynthesis via salvage pathway; L-methionine from S-methyl-5-thio-alpha-D-ribose 1-phosphate: step 1/6. In terms of biological role, catalyzes the interconversion of methylthioribose-1-phosphate (MTR-1-P) into methylthioribulose-1-phosphate (MTRu-1-P). This chain is Methylthioribose-1-phosphate isomerase, found in Oleidesulfovibrio alaskensis (strain ATCC BAA-1058 / DSM 17464 / G20) (Desulfovibrio alaskensis).